The sequence spans 519 residues: BBSome complex member BBS4 (519 aa).

The interval M1–C66 is required for localization to centrosomes. 10 TPR repeats span residues E67–C100, A101–D134, W135–D168, L169–N201, E203–N235, K237–S269, P270–D303, W304–M337, E339–N371, and A379–M417. The interval A101–M337 is interaction with PCM1. The required for localization to centrosomes stretch occupies residues G338–K519. Positions P439–K519 are disordered. 2 stretches are compositionally biased toward polar residues: residues P461–A476 and T510–K519.

It belongs to the BBS4 family. Part of BBSome complex, that contains BBS1, BBS2, BBS4, BBS5, BBS7, BBS8, BBS9 and BBIP10. Interacts with PCM1 and DCTN1. Interacts with CCDC28B. Interacts with ALDOB and C2CD3. Interacts with PKD1. Interacts with CEP290. Interacts with DLEC1.

The protein localises to the cytoplasm. It is found in the cytoskeleton. It localises to the microtubule organizing center. The protein resides in the centrosome. Its subcellular location is the cell projection. The protein localises to the cilium membrane. It is found in the centriolar satellite. It localises to the cilium. The protein resides in the flagellum. Its function is as follows. May be required for the dynein-mediated transport of pericentriolar proteins to the centrosome. Required for microtubule anchoring at the centrosome but not for microtubule nucleation. The BBSome complex is required for ciliogenesis but is dispensable for centriolar satellite function. This ciliogenic function is mediated in part by the Rab8 GDP/GTP exchange factor, which localizes to the basal body and contacts the BBSome. Rab8(GTP) enters the primary cilium and promotes extension of the ciliary membrane. Firstly the BBSome associates with the ciliary membrane and binds to RAB3IP/Rabin8, the guanosyl exchange factor (GEF) for Rab8 and then the Rab8-GTP localizes to the cilium and promotes docking and fusion of carrier vesicles to the base of the ciliary membrane. This chain is BBSome complex member BBS4 (BBS4), found in Bos taurus (Bovine).